Consider the following 2496-residue polypeptide: Hornerin (2496 aa).

The tract at residues 1 to 81 (MPKLLESIVT…TEYLLMILKL (81 aa)) is S-100-like. 2 EF-hand domains span residues 13 to 48 (DVFY…LKNP) and 49 to 84 (DDPD…LTKA). Residues Met-27, Glu-32, Asp-62, Asp-64, Asn-66, Lys-68, and Glu-73 each coordinate Ca(2+). The tract at residues 82–98 (TKACNKIIGKDYCQASG) is s (spacer). Residues 97 to 2496 (SGSKQKNHSH…SGQTSGCGSG (2400 aa)) are disordered. The 1; truncated repeat unit spans residues 99–145 (SKQKNHSHQHQEEQSKKETENKEQKGSISSSAGENDSYSRGSRGSNK). Over residues 107–123 (QHQEEQSKKETENKEQK) the composition is skewed to basic and acidic residues. The span at 124 to 134 (GSISSSAGEND) shows a compositional bias: polar residues. Residues 144–153 (NKSKSKKLRK) show a composition bias toward basic residues. 27 consecutive repeat copies span residues 146–231 (SKSK…NGKH), 232–321 (GSSS…FGSS), 326–400 (SGQS…SEQY), 401–491 (GASS…SCCG), 492–577 (QSSG…SGRY), 578–668 (GASS…SGSR), 669–748 (HGSG…SGRC), 749–839 (GASS…SCCG), 840–926 (QSSG…SGRY), 927–1017 (GASS…SGSR), 1018–1097 (HGSG…SGRC), 1098–1188 (GASS…SCCG), 1189–1274 (QSSG…SGRY), 1275–1365 (GASS…SGSR), 1366–1445 (HGSG…SGRC), 1446–1536 (GASS…SCCG), 1537–1622 (QSSG…SGRY), 1623–1713 (GASS…SGSR), 1714–1793 (HGSG…SGRC), 1794–1884 (GASS…SCCG), 1885–1970 (QSSG…SGRY), 1971–2061 (GASS…SGSR), 2062–2141 (HGSG…SGRC), 2142–2232 (GASS…SGSR), 2233–2312 (HGSG…SGRY), 2313–2403 (GASS…SGSR), and 2410–2496 (QFPI…CGSG). Composition is skewed to low complexity over residues 183–194 (SGFSNSSGNGRP), 200–246 (SGFP…SGHS), and 270–286 (RESS…SEEP). Polar residues-rich tracts occupy residues 294-319 (RKNS…QGFG) and 326-355 (SGQS…SSES). Composition is skewed to low complexity over residues 362-379 (VSGS…STSG), 394-415 (SSGS…SGQS), and 423-448 (SGSR…QQFG). Over residues 449–464 (SGSGRSSGFSQGGSGQ) the composition is skewed to gly residues. The span at 465 to 565 (GRSSRGGQQG…GQTSSSTRQG (101 aa)) shows a compositional bias: low complexity. Phosphoserine is present on residues Ser-506 and Ser-508. Over residues 566–576 (SGQGQASGSGR) the composition is skewed to gly residues. Low complexity-rich tracts occupy residues 577 to 593 (YGAS…GQST) and 600 to 625 (SGSR…QRYG). The span at 626 to 641 (SGSGESSGFSQGGSGQ) shows a compositional bias: gly residues. Low complexity-rich tracts occupy residues 642 to 670 (GRSS…SRHG) and 679 to 713 (SGQQ…GSGS). Arg-646 is subject to Omega-N-methylarginine. Ser-716 is modified (phosphoserine). Residues 723–736 (GSTSGQTASSTRQG) are compositionally biased toward low complexity. Gly residues predominate over residues 737-747 (SGQGQASGSGR). 4 stretches are compositionally biased toward low complexity: residues 748-764 (CGAS…GQST), 771-796 (SGSR…QRFG), 804-884 (GFSQ…SRPA), and 891-914 (SGRS…TRQG). Ser-815 bears the Phosphoserine mark. The segment covering 915–925 (SGQGQASGSGR) has biased composition (gly residues). Low complexity-rich tracts occupy residues 926 to 942 (YGAS…GQST) and 949 to 974 (SGSR…QRYG). Residues 975–990 (SGSGESSGFSQGGSGQ) show a composition bias toward gly residues. 3 stretches are compositionally biased toward low complexity: residues 991 to 1019 (GRSS…SRHG), 1028 to 1062 (SGQQ…GSGS), and 1072 to 1085 (GSTS…TRQG). Arg-995 carries the post-translational modification Omega-N-methylarginine. Positions 1086 to 1096 (SGQGQASGSGR) are enriched in gly residues. Composition is skewed to low complexity over residues 1097–1113 (CGAS…GQST), 1120–1145 (SGSR…QRFG), and 1153–1262 (GFSQ…TRQG). A Phosphoserine modification is found at Ser-1229. Gly residues predominate over residues 1263-1273 (SGQGQASGSGR). A compositionally biased stretch (polar residues) spans 1281–1292 (TSGCRSGQSTRY). The span at 1298-1322 (GSRNSSTQSRGRSTSRESSTSQRYG) shows a compositional bias: low complexity. Residues 1323–1338 (SGSGESSGFSQGGSGQ) show a composition bias toward gly residues. Composition is skewed to low complexity over residues 1339–1367 (GRSS…SRHG), 1376–1410 (SGQQ…GSGS), and 1420–1433 (GSTS…TRQG). At Arg-1343 the chain carries Omega-N-methylarginine. The segment covering 1434-1444 (SGQGQASGSGR) has biased composition (gly residues). Composition is skewed to low complexity over residues 1445–1461 (CGAS…GQST), 1468–1493 (SGSR…QRFG), and 1501–1610 (GFSQ…TRQG). Phosphoserine occurs at positions 1551 and 1553. Gly residues predominate over residues 1611 to 1621 (SGQGQASGSGR). Composition is skewed to low complexity over residues 1622–1631 (YGASSGQTSG) and 1645–1670 (SGSR…QRCG). Phosphoserine is present on Ser-1650. A compositionally biased stretch (gly residues) spans 1671–1686 (SGSGESSGFSQGGSGQ). 3 stretches are compositionally biased toward low complexity: residues 1687–1715 (GRSS…SRHG), 1724–1758 (SGQQ…GSGS), and 1768–1781 (GSTS…TRQG). Omega-N-methylarginine is present on Arg-1691. Gly residues predominate over residues 1782-1792 (SGQGQASGSGR). Polar residues predominate over residues 1800–1811 (TSGCGSDQSTRY). 2 stretches are compositionally biased toward low complexity: residues 1816 to 1841 (SGSR…QRFG) and 1849 to 1958 (GFSQ…TRQG). Residues 1959–1969 (SGQGQASGSGR) are compositionally biased toward gly residues. Low complexity-rich tracts occupy residues 1970–1986 (YGAS…GQST) and 1993–2018 (SGSR…QRYG). Ser-2011 carries the post-translational modification Phosphoserine. The segment covering 2019-2034 (SGSGESSGFSQGGSGQ) has biased composition (gly residues). Low complexity-rich tracts occupy residues 2035 to 2063 (GRSS…SRHG) and 2072 to 2106 (SGQQ…GSGS). An Omega-N-methylarginine modification is found at Arg-2039. Ser-2109 and Ser-2124 each carry phosphoserine. Positions 2116–2129 (GSTSGQTASSTRQG) are enriched in low complexity. Residues 2130–2140 (SGQGQASGSGR) show a composition bias toward gly residues. 2 stretches are compositionally biased toward low complexity: residues 2141 to 2157 (CGAS…GQST) and 2164 to 2189 (SGSR…QRYG). Gly residues predominate over residues 2190–2205 (SGSGESSGFSQGGSGQ). Low complexity-rich tracts occupy residues 2206 to 2234 (GRSS…SRHG) and 2243 to 2300 (SGQQ…TRQG). Arg-2210 is modified (omega-N-methylarginine). Over residues 2301–2311 (SGQGQASGSGR) the composition is skewed to gly residues. 2 stretches are compositionally biased toward low complexity: residues 2312-2328 (YGAS…GQST) and 2335-2360 (SGSR…QRYG). Residue Ser-2353 is modified to Phosphoserine. Over residues 2361-2376 (SGSGESSGFSQGGSGQ) the composition is skewed to gly residues. Composition is skewed to low complexity over residues 2377 to 2405 (GRSS…SRHG), 2414 to 2448 (SGQQ…GSGS), and 2458 to 2471 (GSTS…TRQG). Arg-2381 is modified (omega-N-methylarginine). A compositionally biased stretch (gly residues) spans 2472-2482 (SGQGQASGSGR).

Belongs to the S100-fused protein family. This sequence in the N-terminal section; belongs to the S-100 family. Post-translationally, processed during the process of epidermal differentiation. Forms covalent cross-links mediated by transglutaminase TGM3, between glutamine and the epsilon-amino group of lysine residues (in vitro). In terms of tissue distribution, embryonic skin. Highest level in the adult forestomach followed by the skin. Lower levels in the tongue, esophagus. Detected in the granular and cornified layers of the mature epidermis.

It localises to the cytoplasmic granule. Component of the epidermal cornified cell envelopes. The chain is Hornerin (Hrnr) from Mus musculus (Mouse).